The sequence spans 101 residues: Large ribosomal subunit protein eL30 (101 aa).

This sequence belongs to the eukaryotic ribosomal protein eL30 family.

This is Large ribosomal subunit protein eL30 (rpl30e) from Thermococcus celer.